We begin with the raw amino-acid sequence, 133 residues long: Small ribosomal subunit protein uS8 (133 aa).

Belongs to the universal ribosomal protein uS8 family. As to quaternary structure, part of the 30S ribosomal subunit. Contacts proteins S5 and S12.

Its function is as follows. One of the primary rRNA binding proteins, it binds directly to 16S rRNA central domain where it helps coordinate assembly of the platform of the 30S subunit. This is Small ribosomal subunit protein uS8 from Rippkaea orientalis (strain PCC 8801 / RF-1) (Cyanothece sp. (strain PCC 8801)).